We begin with the raw amino-acid sequence, 127 residues long: Large ribosomal subunit protein bL17 (127 aa).

This sequence belongs to the bacterial ribosomal protein bL17 family. In terms of assembly, part of the 50S ribosomal subunit. Contacts protein L32.

This chain is Large ribosomal subunit protein bL17, found in Mannheimia succiniciproducens (strain KCTC 0769BP / MBEL55E).